We begin with the raw amino-acid sequence, 507 residues long: Photosystem II CP47 reaction center protein (507 aa).

Over 2-16 (GLPWYRVHTVVLNDP) the chain is Cytoplasmic. Residues 17–39 (GRLISVHLMHTALVAGWAGSMAL) traverse the membrane as a helical segment. The Lumenal, thylakoid portion of the chain corresponds to 40–94 (YELAIFDSSDAVLNPMWRQGMFVLPFMARLGVTSSWNGWSVTGETGLDPGFWSFE). A helical transmembrane segment spans residues 95-116 (GVAAAHIVLSGLLFLAAVWHWV). Topologically, residues 117–134 (FWDLELFVDPRTGESALD) are cytoplasmic. Residues 135–159 (LPKMFGIHLFLSGLLCFGFGAFHLT) form a helical membrane-spanning segment. Residues 160 to 196 (GVWGPGMWVSDPYGLTGHVQPVAPEWGPAGFNPFNPG) lie on the Lumenal, thylakoid side of the membrane. The helical transmembrane segment at 197 to 218 (GVVAHHIAAGIVGIIAGLFHLT) threads the bilayer. The Cytoplasmic segment spans residues 219–233 (VRPPERLYKALRMGN). The helical transmembrane segment at 234–255 (IETVLSSSIAAVFFAAFVVAGT) threads the bilayer. The Lumenal, thylakoid segment spans residues 256-450 (MWYGNATTPI…GVFRTSPRGW (195 aa)). Residues 451 to 474 (FTFGHAVFALLFFFGHIWHGSRTL) traverse the membrane as a helical segment. The Cytoplasmic segment spans residues 475–507 (FRDVFAGVDPGLEEQVEFGVFAKVGDLSTRKEA).

The protein belongs to the PsbB/PsbC family. PsbB subfamily. As to quaternary structure, PSII is composed of 1 copy each of membrane proteins PsbA, PsbB, PsbC, PsbD, PsbE, PsbF, PsbH, PsbI, PsbJ, PsbK, PsbL, PsbM, PsbT, PsbX, Psb30/Ycf12, peripheral proteins PsbO, CyanoQ (PsbQ), PsbU, PsbV and a large number of cofactors. It forms dimeric complexes. Contacts PsbQ. Binds multiple chlorophylls. PSII binds additional chlorophylls, carotenoids and specific lipids. serves as cofactor.

It is found in the cellular thylakoid membrane. One of the components of the core complex of photosystem II (PSII). It binds chlorophyll and helps catalyze the primary light-induced photochemical processes of PSII. PSII is a light-driven water:plastoquinone oxidoreductase, using light energy to abstract electrons from H(2)O, generating O(2) and a proton gradient subsequently used for ATP formation. The chain is Photosystem II CP47 reaction center protein from Synechocystis sp. (strain ATCC 27184 / PCC 6803 / Kazusa).